Consider the following 109-residue polypeptide: Large ribosomal subunit protein uL23 (109 aa).

It belongs to the universal ribosomal protein uL23 family. In terms of assembly, part of the 50S ribosomal subunit. Contacts protein L29, and trigger factor when it is bound to the ribosome.

One of the early assembly proteins it binds 23S rRNA. One of the proteins that surrounds the polypeptide exit tunnel on the outside of the ribosome. Forms the main docking site for trigger factor binding to the ribosome. The chain is Large ribosomal subunit protein uL23 from Aquifex pyrophilus.